The primary structure comprises 74 residues: uncharacterized protein (74 aa).

2 disordered regions span residues 1–26 (MNGP…SGVF) and 46–74 (ITNS…SFTQ). The chain crosses the membrane as a helical span at residues 34–50 (VSNKSIMLISLKITNSP). A compositionally biased stretch (low complexity) spans 47-74 (TNSPNSNSRGSSSSSSTSKSSSKTSFTQ).

It is found in the membrane. This is an uncharacterized protein from Dictyostelium discoideum (Social amoeba).